Reading from the N-terminus, the 368-residue chain is Alanine racemase (368 aa).

Residue Lys-40 is the Proton acceptor; specific for D-alanine of the active site. Lys-40 is modified (N6-(pyridoxal phosphate)lysine). Arg-134 contributes to the substrate binding site. Tyr-263 functions as the Proton acceptor; specific for L-alanine in the catalytic mechanism. Residue Met-310 participates in substrate binding.

This sequence belongs to the alanine racemase family. Pyridoxal 5'-phosphate is required as a cofactor.

The catalysed reaction is L-alanine = D-alanine. Its pathway is amino-acid biosynthesis; D-alanine biosynthesis; D-alanine from L-alanine: step 1/1. Catalyzes the interconversion of L-alanine and D-alanine. May also act on other amino acids. The protein is Alanine racemase (alr) of Listeria monocytogenes serotype 4b (strain F2365).